A 290-amino-acid polypeptide reads, in one-letter code: UPF0761 membrane protein YihY (290 aa).

6 helical membrane passes run 44–64 (LLSL…FPMF), 104–124 (VGAC…DSAL), 140–160 (FAVY…SLAI), 183–203 (ILPL…VPTT), 210–230 (ALVG…GFAL), and 244–264 (VLAV…IVLL).

It belongs to the UPF0761 family.

The protein localises to the cell inner membrane. This is UPF0761 membrane protein YihY from Salmonella paratyphi B (strain ATCC BAA-1250 / SPB7).